The following is a 256-amino-acid chain: Glucanase inhibitor protein 2 (256 aa).

An N-terminal signal peptide occupies residues M1–G15. Positions I27–K254 constitute a Peptidase S1 domain. C54 and C70 are oxidised to a cystine. N-linked (GlcNAc...) asparagine glycosylation is found at N87, N102, N107, and N157. 2 cysteine pairs are disulfide-bonded: C177–C189 and C199–C230.

Belongs to the peptidase S1 family. Forms an apoplastic complex with host endoglucanases in tomato leaves during P.infestans infection.

The protein resides in the secreted. In terms of biological role, secreted effector that suppresses host plant glucan elicitor-mediated defense responses. Targets host endoglucanases and inhibits the endoglucanase-mediated release of elicitor-active glucan oligosaccharides from P.infestans cell walls. This is Glucanase inhibitor protein 2 from Phytophthora infestans (Potato late blight agent).